We begin with the raw amino-acid sequence, 243 residues long: Glycerophosphodiester phosphodiesterase (243 aa).

In terms of domain architecture, GP-PDE spans 3-239 (TLVIAHRGDS…DDPETLINLV (237 aa)). His-8 functions as the Proton acceptor in the catalytic mechanism. Ca(2+) contacts are provided by Glu-35 and Asp-37. His-50 (proton donor) is an active-site residue. Position 110 (Glu-110) interacts with Ca(2+).

Belongs to the glycerophosphoryl diester phosphodiesterase family. In terms of assembly, homodimer. It depends on Mg(2+) as a cofactor. Requires Ca(2+) as cofactor.

It carries out the reaction a sn-glycero-3-phosphodiester + H2O = an alcohol + sn-glycerol 3-phosphate + H(+). The catalysed reaction is sn-glycerol 3-phosphocholine + H2O = sn-glycerol 3-phosphate + choline + H(+). With respect to regulation, inhibited by EDTA. Functionally, glycerophosphodiester phosphodiesterase hydrolyzes glycerophosphodiesters into glycerol-3-phosphate (G3P) and the corresponding alcohol. Can use glycerophosphocholine. This Caldanaerobacter subterraneus subsp. tengcongensis (strain DSM 15242 / JCM 11007 / NBRC 100824 / MB4) (Thermoanaerobacter tengcongensis) protein is Glycerophosphodiester phosphodiesterase.